We begin with the raw amino-acid sequence, 73 residues long: Carboxysome shell vertex protein CsoS4B (73 aa).

One can recognise a BMV domain in the interval 1–68; the sequence is MVCTQRVAGL…TDLTIGGIID (68 aa).

This sequence belongs to the CcmL/EutN family. CsoS4 subfamily. Homopentamer.

The protein resides in the carboxysome. Its function is as follows. Probably forms vertices in the carboxysome, a polyhedral inclusion where RuBisCO (ribulose bisphosphate carboxylase, cbbL-cbbS) is sequestered. Has been modeled to induce curvature upon insertion into an otherwise flat hexagonal layer of major carboxysome subunits. Has not been identified in purified carboxysomes; it is expected to be present in very low amounts. The sequence is that of Carboxysome shell vertex protein CsoS4B from Prochlorococcus marinus subsp. pastoris (strain CCMP1986 / NIES-2087 / MED4).